Here is a 396-residue protein sequence, read N- to C-terminus: Elongation factor Tu 2 (396 aa).

The 197-residue stretch at Lys-10–Glu-206 folds into the tr-type G domain. The tract at residues Gly-19 to Thr-26 is G1. Residue Gly-19 to Thr-26 participates in GTP binding. Thr-26 provides a ligand contact to Mg(2+). Residues Gly-60–Asn-64 form a G2 region. Positions Asp-81–Gly-84 are G3. Residues Asp-81–His-85 and Asn-136–Asp-139 contribute to the GTP site. A G4 region spans residues Asn-136–Asp-139. Residues Ser-174–Leu-176 form a G5 region.

This sequence belongs to the TRAFAC class translation factor GTPase superfamily. Classic translation factor GTPase family. EF-Tu/EF-1A subfamily. In terms of assembly, monomer.

Its subcellular location is the cytoplasm. The catalysed reaction is GTP + H2O = GDP + phosphate + H(+). In terms of biological role, GTP hydrolase that promotes the GTP-dependent binding of aminoacyl-tRNA to the A-site of ribosomes during protein biosynthesis. This chain is Elongation factor Tu 2, found in Hyphomonas neptunium (strain ATCC 15444).